A 446-amino-acid polypeptide reads, in one-letter code: MPARAAGAGVELSRLSAFKPDLYHRAWSSIPHPTLPLIATAHEKSVTVFSLSTLSAHSNLTGGHTRSVRCAVWKPNLPSGKLCLVTASFDSTAGLWRWEGDVPLEEGTKKGESTEIDVTRRRNNNDSDKDNDDDWEFTLVLEGHENEIKSAAFSPSGQYLATCSRDKSIWIWEDVGANEGDDEWETVAVLTEHDGDVKCVAWCPDVPGRNISSYSPDVLASASYDDTIRIWREDGDGEWACVAVLEGHSSTVWGVQWEPKVDNTKFPRLISWSADKTIRVWTLEQDDPEASLSQPGAVQSPFKSGLGGIPNTMRRTLKEEWRCSAVLPSVHTRDIYSASWSKNGRVASTGSDGSILVYEECAPSNPSTTPADLEEGDSNVIVKPGEAKWKVLGKVSDGHGPYEINHITWCSRYDAGVEQRGVEEMLVTTGDDGIVQAWQLKESIEL.

WD repeat units lie at residues 17–59, 63–106, 143–182, 192–241, 247–291, 330–368, and 398–446; these read AFKP…AHSN, GHTR…PLEE, GHEN…EGDD, EHDG…EWAC, GHSS…PEAS, VHTR…NPST, and GHGP…SIEL. A compositionally biased stretch (basic and acidic residues) spans 106-128; the sequence is EGTKKGESTEIDVTRRRNNNDSD. The disordered stretch occupies residues 106-133; sequence EGTKKGESTEIDVTRRRNNNDSDKDNDD.

Belongs to the WD repeat CIA1 family.

In terms of biological role, essential component of the cytosolic iron-sulfur (Fe/S) protein assembly machinery. Required for the maturation of extramitochondrial Fe/S proteins. The protein is Probable cytosolic iron-sulfur protein assembly protein 1 of Pyricularia oryzae (strain 70-15 / ATCC MYA-4617 / FGSC 8958) (Rice blast fungus).